Consider the following 423-residue polypeptide: Progestin and adipoQ receptor-like protein 1 (423 aa).

Residues 1–201 (MDPDEVNQAL…KSIWSLHTET (201 aa)) are Cytoplasmic-facing. The disordered stretch occupies residues 54 to 140 (VVSPTNSDDE…DEDELEVDVK (87 aa)). The span at 60–69 (SDDEEGEFCS) shows a compositional bias: acidic residues. The segment covering 104–114 (TVLRYRRKKGG) has biased composition (basic residues). A helical membrane pass occupies residues 202–222 (GNIWTHLIGCVAFFLLACWFL). Over 223–234 (TRPDNHIQFQEK) the chain is Extracellular. The chain crosses the membrane as a helical span at residues 235 to 252 (VVFSFFFAGAVSVSDSRS). The Cytoplasmic portion of the chain corresponds to 253–288 (PSTPSRVIRSTSSRYSANSTIWESRCSLSARLFQPK). A helical transmembrane segment spans residues 289 to 309 (ITYIAMVCVLGIGAIVVSLWD). Topologically, residues 310 to 320 (KFSESKYRPVR) are extracellular. The chain crosses the membrane as a helical span at residues 321–341 (AAVFVGMGCSGVIPTIHYIIT). Residues 342–351 (DGVHSLFADN) are Cytoplasmic-facing. Residues 352 to 372 (SFHWLLLMAFLYLLGAALYAT) traverse the membrane as a helical segment. The Extracellular portion of the chain corresponds to 373–392 (RTPERFFPGKCDIWFQSHQL). Residues 393–413 (FHTCVVIAAFVHYYGISEMAF) traverse the membrane as a helical segment. The Cytoplasmic portion of the chain corresponds to 414–423 (ARLNEQCPVR).

The protein belongs to the ADIPOR family.

The protein localises to the membrane. In terms of biological role, probable receptor, which may be involved in metabolic pathways that regulate lipid metabolism such as fatty acid oxidation. This chain is Progestin and adipoQ receptor-like protein 1, found in Caenorhabditis briggsae.